A 286-amino-acid polypeptide reads, in one-letter code: Homoserine kinase (286 aa).

Position 78-88 (78-88 (PLARGLGSSSS)) interacts with ATP.

The protein belongs to the GHMP kinase family. Homoserine kinase subfamily.

It localises to the cytoplasm. It catalyses the reaction L-homoserine + ATP = O-phospho-L-homoserine + ADP + H(+). It participates in amino-acid biosynthesis; L-threonine biosynthesis; L-threonine from L-aspartate: step 4/5. In terms of biological role, catalyzes the ATP-dependent phosphorylation of L-homoserine to L-homoserine phosphate. The polypeptide is Homoserine kinase (Streptococcus equi subsp. zooepidemicus (strain H70)).